A 67-amino-acid chain; its full sequence is MPGVYLDDNEYNFDIALRRFKKQVEKAGVLSEMKKRQHFEKPSVMRKKKKAAARKRLLKKMRKANMG.

This sequence belongs to the bacterial ribosomal protein bS21 family.

In Oleidesulfovibrio alaskensis (strain ATCC BAA-1058 / DSM 17464 / G20) (Desulfovibrio alaskensis), this protein is Small ribosomal subunit protein bS21.